Reading from the N-terminus, the 329-residue chain is DNA repair and recombination protein RadA (329 aa).

Residue 107-114 (GEFGSGKS) coordinates ATP.

Belongs to the eukaryotic RecA-like protein family.

In terms of biological role, involved in DNA repair and in homologous recombination. Binds and assemble on single-stranded DNA to form a nucleoprotein filament. Hydrolyzes ATP in a ssDNA-dependent manner and promotes DNA strand exchange between homologous DNA molecules. This is DNA repair and recombination protein RadA from Methanocorpusculum labreanum (strain ATCC 43576 / DSM 4855 / Z).